The chain runs to 546 residues: CTP synthase (546 aa).

Residues 1–269 (MNSNTKIIFV…DAKLVELLNL (269 aa)) form an amidoligase domain region. Ser-16 is a binding site for CTP. Residue Ser-16 participates in UTP binding. ATP is bound by residues 17-22 (SLGKGV) and Asp-74. Mg(2+)-binding residues include Asp-74 and Glu-143. CTP is bound by residues 150–152 (DIE), 190–195 (KTKPTQ), and Lys-226. Residues 190–195 (KTKPTQ) and Lys-226 each bind UTP. The 253-residue stretch at 294 to 546 (TIAMVGKYVS…IQAAIENSNN (253 aa)) folds into the Glutamine amidotransferase type-1 domain. Gly-356 is a binding site for L-glutamine. Residue Cys-383 is the Nucleophile; for glutamine hydrolysis of the active site. Residues 384 to 387 (LGMQ), Glu-407, and Arg-474 contribute to the L-glutamine site. Catalysis depends on residues His-519 and Glu-521.

It belongs to the CTP synthase family. As to quaternary structure, homotetramer.

It catalyses the reaction UTP + L-glutamine + ATP + H2O = CTP + L-glutamate + ADP + phosphate + 2 H(+). It carries out the reaction L-glutamine + H2O = L-glutamate + NH4(+). The catalysed reaction is UTP + NH4(+) + ATP = CTP + ADP + phosphate + 2 H(+). It functions in the pathway pyrimidine metabolism; CTP biosynthesis via de novo pathway; CTP from UDP: step 2/2. With respect to regulation, allosterically activated by GTP, when glutamine is the substrate; GTP has no effect on the reaction when ammonia is the substrate. The allosteric effector GTP functions by stabilizing the protein conformation that binds the tetrahedral intermediate(s) formed during glutamine hydrolysis. Inhibited by the product CTP, via allosteric rather than competitive inhibition. In terms of biological role, catalyzes the ATP-dependent amination of UTP to CTP with either L-glutamine or ammonia as the source of nitrogen. Regulates intracellular CTP levels through interactions with the four ribonucleotide triphosphates. In Francisella tularensis subsp. mediasiatica (strain FSC147), this protein is CTP synthase.